Reading from the N-terminus, the 299-residue chain is ATP phosphoribosyltransferase (299 aa).

This sequence belongs to the ATP phosphoribosyltransferase family. Long subfamily. As to quaternary structure, equilibrium between an active dimeric form, an inactive hexameric form and higher aggregates. Interconversion between the various forms is largely reversible and is influenced by the natural substrates and inhibitors of the enzyme. Requires Mg(2+) as cofactor.

The protein resides in the cytoplasm. It carries out the reaction 1-(5-phospho-beta-D-ribosyl)-ATP + diphosphate = 5-phospho-alpha-D-ribose 1-diphosphate + ATP. The protein operates within amino-acid biosynthesis; L-histidine biosynthesis; L-histidine from 5-phospho-alpha-D-ribose 1-diphosphate: step 1/9. Feedback inhibited by histidine. Catalyzes the condensation of ATP and 5-phosphoribose 1-diphosphate to form N'-(5'-phosphoribosyl)-ATP (PR-ATP). Has a crucial role in the pathway because the rate of histidine biosynthesis seems to be controlled primarily by regulation of HisG enzymatic activity. This chain is ATP phosphoribosyltransferase, found in Pectobacterium carotovorum subsp. carotovorum (strain PC1).